A 560-amino-acid chain; its full sequence is NRAMP-like transporter smf-3 (560 aa).

Over 1-43 the chain is Cytoplasmic; sequence MEGEMKCPIEEIREKPEMRKAQQTYEVQVEVEDTPDTTFSWRK. The chain crosses the membrane as a helical span at residues 44-64; that stretch reads LWAFTGPGFLMSIAYLDPGNI. Over 65–71 the chain is Extracellular; that stretch reads ESDLQAG. Residues 72–92 traverse the membrane as a helical segment; sequence AISYFKLIWVLLVAHIMGLLL. Residues 93–120 lie on the Cytoplasmic side of the membrane; that stretch reads QRLAARLGVVSGKHMAEIAFSYYPKIPR. A helical transmembrane segment spans residues 121 to 141; it reads LVLWMLVESAIVGSDMQEVIG. Residues 142 to 152 lie on the Extracellular side of the membrane; the sequence is TAISFYLLSNG. The helical transmembrane segment at 153-173 threads the bilayer; that stretch reads VIPLWAGVLITICDTFTFLFL. Topologically, residues 174-182 are cytoplasmic; it reads EKYGVRKFE. Residues 183 to 203 traverse the membrane as a helical segment; sequence AFFCFLITCMAITFGYEFGVS. Topologically, residues 204–229 are extracellular; the sequence is APDAGKMFSGMFVPWCNGCDNNMVMQ. A helical membrane pass occupies residues 230-250; sequence GVAIIGAVIMPHNFYLHSALV. Residues 251–268 are Cytoplasmic-facing; that stretch reads KSRRVDRRRAEKVTEANK. A helical transmembrane segment spans residues 269–289; that stretch reads YFFIESAFALFVSFIINTLVI. Residues 290–339 are Extracellular-facing; that stretch reads SVFAQGMYGKTNQDIRDTCYNNTHNGMPDFYKVEFPANNDAAQSDIYHAG. N-linked (GlcNAc...) asparagine glycosylation is present at N310. The helical transmembrane segment at 340-360 threads the bilayer; it reads IFLGCTFGIFALYVWAVGILA. Residues 361 to 390 are Cytoplasmic-facing; sequence AGQSSTMTGTYAGQFAMEGFIQIKLPQWKR. A helical transmembrane segment spans residues 391-411; the sequence is ILITRSLAILPTLAVVIFSGG. Residues 412–420 lie on the Extracellular side of the membrane; the sequence is IDNISSLND. A glycan (N-linked (GlcNAc...) asparagine) is linked at N414. The helical transmembrane segment at 421–441 threads the bilayer; the sequence is FLNCLQLIQLPFALIPVLTFV. Residues 442–458 lie on the Cytoplasmic side of the membrane; that stretch reads SDRNIMHEYKLASVSKV. The chain crosses the membrane as a helical span at residues 459–479; the sequence is VSIVISLIILFINFYFLYSWI. Residues 480–486 lie on the Extracellular side of the membrane; the sequence is GSTFGYN. The helical transmembrane segment at 487 to 507 threads the bilayer; it reads AVSIPITIFCAIFYIIFIAYL. Over 508–560 the chain is Cytoplasmic; that stretch reads TYYCLVAMEFISPIQTKWLAEPIYHDFDAPWLEDSENPSTKNTISDDELSMRY.

The protein belongs to the NRAMP family. In terms of tissue distribution, expressed in dopaminergic neurons (at protein level). Expressed in intestine with a weaker expression in the most proximal and distal regions. Weakly expressed in the hyp1-6, hyp7 and hyp8-12 hypodermis and in head and tail neurons.

The protein resides in the apical cell membrane. It is found in the cytoplasmic vesicle membrane. Its function is as follows. Probable divalent metal ion transporter which regulates the uptake of several heavy metals such as Mn(2+), Al(3+) and iron. Plays a role in modulating Al(3+)-induced dopamine (DA) neuron degeneration through the intracellular sequestration of Al(3+). The polypeptide is NRAMP-like transporter smf-3 (Caenorhabditis elegans).